We begin with the raw amino-acid sequence, 246 residues long: 4-hydroxy-tetrahydrodipicolinate reductase (246 aa).

Residues 8–13, 75–77, and 99–102 each bind NAD(+); these read GISGRM, GTT, and ASNY. His-132 serves as the catalytic Proton donor/acceptor. (S)-2,3,4,5-tetrahydrodipicolinate is bound at residue His-133. Lys-136 functions as the Proton donor in the catalytic mechanism. 142–143 is a binding site for (S)-2,3,4,5-tetrahydrodipicolinate; sequence GT.

The protein belongs to the DapB family.

It is found in the cytoplasm. It carries out the reaction (S)-2,3,4,5-tetrahydrodipicolinate + NAD(+) + H2O = (2S,4S)-4-hydroxy-2,3,4,5-tetrahydrodipicolinate + NADH + H(+). The catalysed reaction is (S)-2,3,4,5-tetrahydrodipicolinate + NADP(+) + H2O = (2S,4S)-4-hydroxy-2,3,4,5-tetrahydrodipicolinate + NADPH + H(+). Its pathway is amino-acid biosynthesis; L-lysine biosynthesis via DAP pathway; (S)-tetrahydrodipicolinate from L-aspartate: step 4/4. Its function is as follows. Catalyzes the conversion of 4-hydroxy-tetrahydrodipicolinate (HTPA) to tetrahydrodipicolinate. This chain is 4-hydroxy-tetrahydrodipicolinate reductase, found in Akkermansia muciniphila (strain ATCC BAA-835 / DSM 22959 / JCM 33894 / BCRC 81048 / CCUG 64013 / CIP 107961 / Muc).